We begin with the raw amino-acid sequence, 20 residues long: DnaJ homolog subfamily C member 1 (20 aa).

Over 1–20 (WESGDLELFDLVEEVXLNFY) the chain is Lumenal. The region spanning 18-20 (NFY) is the J domain.

In terms of assembly, interacts (via SANT 2 domain) with SERPINA3; the interaction delays the formation of the covalent inhibitory complex SERPINA3-chymotrypsin, but does not alter the catalytic activity of SERPINA3. Interacts (via SANT 2 domain) with ITIH4 (via C-terminus); the interaction protects ITIH4 against in vitro cleavage by kallikrein. Interacts (via J domain) with HSPA5. Interacts (via cytosolic domain) with ribosomes.

It is found in the endoplasmic reticulum membrane. The protein resides in the nucleus membrane. Its subcellular location is the microsome membrane. The protein is DnaJ homolog subfamily C member 1 (DNAJC1) of Canis lupus familiaris (Dog).